The chain runs to 137 residues: uncharacterized protein (137 aa).

This is an uncharacterized protein from Bacillus subtilis (strain 168).